The following is a 251-amino-acid chain: Phosphate import ATP-binding protein PstB 2 (251 aa).

Residues 5 to 246 (ITSKDVHLSY…PKKQITSDYL (242 aa)) enclose the ABC transporter domain. Residue 37–44 (GPSGCGKS) coordinates ATP.

Belongs to the ABC transporter superfamily. Phosphate importer (TC 3.A.1.7) family. As to quaternary structure, the complex is composed of two ATP-binding proteins (PstB), two transmembrane proteins (PstC and PstA) and a solute-binding protein (PstS).

Its subcellular location is the cell membrane. It catalyses the reaction phosphate(out) + ATP + H2O = ADP + 2 phosphate(in) + H(+). Part of the ABC transporter complex PstSACB involved in phosphate import. Responsible for energy coupling to the transport system. The protein is Phosphate import ATP-binding protein PstB 2 of Lactobacillus johnsonii (strain CNCM I-12250 / La1 / NCC 533).